The sequence spans 341 residues: Phosphate acyltransferase (341 aa).

The protein belongs to the PlsX family. Homodimer. Probably interacts with PlsY.

It localises to the cytoplasm. It carries out the reaction a fatty acyl-[ACP] + phosphate = an acyl phosphate + holo-[ACP]. It functions in the pathway lipid metabolism; phospholipid metabolism. Catalyzes the reversible formation of acyl-phosphate (acyl-PO(4)) from acyl-[acyl-carrier-protein] (acyl-ACP). This enzyme utilizes acyl-ACP as fatty acyl donor, but not acyl-CoA. This is Phosphate acyltransferase from Vibrio cholerae serotype O1 (strain ATCC 39541 / Classical Ogawa 395 / O395).